The primary structure comprises 151 residues: Deoxyuridine 5'-triphosphate nucleotidohydrolase (151 aa).

Residues 70–72 (RSG), Asn-83, 87–89 (LID), and Met-97 contribute to the substrate site.

The protein belongs to the dUTPase family. It depends on Mg(2+) as a cofactor.

It catalyses the reaction dUTP + H2O = dUMP + diphosphate + H(+). It functions in the pathway pyrimidine metabolism; dUMP biosynthesis; dUMP from dCTP (dUTP route): step 2/2. Its function is as follows. This enzyme is involved in nucleotide metabolism: it produces dUMP, the immediate precursor of thymidine nucleotides and it decreases the intracellular concentration of dUTP so that uracil cannot be incorporated into DNA. This chain is Deoxyuridine 5'-triphosphate nucleotidohydrolase, found in Actinobacillus succinogenes (strain ATCC 55618 / DSM 22257 / CCUG 43843 / 130Z).